Here is a 178-residue protein sequence, read N- to C-terminus: CDP-archaeol synthase (178 aa).

The next 5 helical transmembrane spans lie at 3–23 (IIYL…ANAT), 55–75 (TFFG…IFNL), 91–111 (GIVG…GSFI), 125–145 (ILDQ…FAPV), and 149–169 (MGIF…IIAY).

It belongs to the CDP-archaeol synthase family. Mg(2+) serves as cofactor.

Its subcellular location is the cell membrane. It carries out the reaction 2,3-bis-O-(geranylgeranyl)-sn-glycerol 1-phosphate + CTP + H(+) = CDP-2,3-bis-O-(geranylgeranyl)-sn-glycerol + diphosphate. It participates in membrane lipid metabolism; glycerophospholipid metabolism. Catalyzes the formation of CDP-2,3-bis-(O-geranylgeranyl)-sn-glycerol (CDP-archaeol) from 2,3-bis-(O-geranylgeranyl)-sn-glycerol 1-phosphate (DGGGP) and CTP. This reaction is the third ether-bond-formation step in the biosynthesis of archaeal membrane lipids. The chain is CDP-archaeol synthase from Methanococcus aeolicus (strain ATCC BAA-1280 / DSM 17508 / OCM 812 / Nankai-3).